The following is a 464-amino-acid chain: Argininosuccinate lyase (464 aa).

This sequence belongs to the lyase 1 family. Argininosuccinate lyase subfamily.

It is found in the cytoplasm. It carries out the reaction 2-(N(omega)-L-arginino)succinate = fumarate + L-arginine. It participates in amino-acid biosynthesis; L-arginine biosynthesis; L-arginine from L-ornithine and carbamoyl phosphate: step 3/3. The polypeptide is Argininosuccinate lyase (Alcanivorax borkumensis (strain ATCC 700651 / DSM 11573 / NCIMB 13689 / SK2)).